Consider the following 1818-residue polypeptide: Unconventional myosin-Vb (1818 aa).

Positions threonine 8–proline 60 constitute a Myosin N-terminal SH3-like domain. The tract at residues valine 21 to leucine 40 is requires for interaction with LIMA1. A Myosin motor domain is found at valine 69–alanine 762. Position 163–170 (glycine 163–threonine 170) interacts with ATP. An actin-binding region spans residues leucine 641 to aspartate 663. IQ domains are found at residues phenylalanine 765–serine 794, leucine 788–alanine 817, arginine 813–isoleucine 842, valine 836–alanine 865, methionine 861–valine 890, and glutamate 884–serine 913. 2 disordered regions span residues leucine 1086–aspartate 1120 and glutamine 1161–aspartate 1188. The segment covering proline 1098 to isoleucine 1118 has biased composition (polar residues). Coiled-coil stretches lie at residues methionine 1140 to arginine 1261 and leucine 1313 to glutamine 1415. Serine 1416 is modified (phosphoserine). Residues serine 1496–glutamate 1773 form the Dilute domain.

Belongs to the TRAFAC class myosin-kinesin ATPase superfamily. Myosin family. As to quaternary structure, component of the CART complex, at least composed of ACTN4, HGS/HRS, MYO5B and TRIM3. Interacts with RAB11FIP2. Interacts with RAB11A and RAB8A. Found in a complex with CFTR and RAB11A. Interacts with NPC1L1. Interacts with LIMA1.

It is found in the cytoplasm. In terms of biological role, may be involved in vesicular trafficking via its association with the CART complex. The CART complex is necessary for efficient transferrin receptor recycling but not for EGFR degradation. Required in a complex with RAB11A and RAB11FIP2 for the transport of NPC1L1 to the plasma membrane. Together with RAB11A participates in CFTR trafficking to the plasma membrane and TF (transferrin) recycling in nonpolarized cells. Together with RAB11A and RAB8A participates in epithelial cell polarization. Together with RAB25 regulates transcytosis. Required for proper localization of bile salt export pump ABCB11 at the apical/canalicular plasma membrane of hepatocytes. The chain is Unconventional myosin-Vb (Myo5b) from Mus musculus (Mouse).